The following is an 800-amino-acid chain: Endonuclease MutS2 (800 aa).

336–343 (GPNTGGKT) provides a ligand contact to ATP. Positions 725–800 (LDLRGVRYEA…GDGATIVELK (76 aa)) constitute a Smr domain.

It belongs to the DNA mismatch repair MutS family. MutS2 subfamily. As to quaternary structure, homodimer. Binds to stalled ribosomes, contacting rRNA.

Endonuclease that is involved in the suppression of homologous recombination and thus may have a key role in the control of bacterial genetic diversity. In terms of biological role, acts as a ribosome collision sensor, splitting the ribosome into its 2 subunits. Detects stalled/collided 70S ribosomes which it binds and splits by an ATP-hydrolysis driven conformational change. Acts upstream of the ribosome quality control system (RQC), a ribosome-associated complex that mediates the extraction of incompletely synthesized nascent chains from stalled ribosomes and their subsequent degradation. Probably generates substrates for RQC. This Leuconostoc mesenteroides subsp. mesenteroides (strain ATCC 8293 / DSM 20343 / BCRC 11652 / CCM 1803 / JCM 6124 / NCDO 523 / NBRC 100496 / NCIMB 8023 / NCTC 12954 / NRRL B-1118 / 37Y) protein is Endonuclease MutS2.